Reading from the N-terminus, the 490-residue chain is Probable cytochrome P450 518B1 (490 aa).

A helical transmembrane segment spans residues 2-22 (LTNIIILIILYLFYDFCYKNF). Residue Cys-437 participates in heme binding.

The protein belongs to the cytochrome P450 family. Heme serves as cofactor.

It is found in the membrane. In Dictyostelium discoideum (Social amoeba), this protein is Probable cytochrome P450 518B1 (cyp518B1).